The following is a 650-amino-acid chain: XK-related protein 4 (650 aa).

Over residues 1 to 15 (MAAKSDGRLKMKKSS) the composition is skewed to basic and acidic residues. Positions 1–44 (MAAKSDGRLKMKKSSDVAFTPLQNSDHSGSVQGLAPGLPSGSGA) are disordered. Residues 21–31 (PLQNSDHSGSV) show a composition bias toward polar residues. 2 helical membrane passes run 114-134 (WILA…WLAV) and 144-164 (WFGL…VFSF). S200 is subject to Phosphoserine. The segment at 200-238 (SAAGEGEARPSTPQRQASNASKSNIAAANSGSNSSGATR) is disordered. Over residues 216-238 (ASNASKSNIAAANSGSNSSGATR) the composition is skewed to low complexity. Helical transmembrane passes span 248–268 (CSFC…GQIW), 306–326 (HLLA…CIIV), 331–351 (LQAL…WALA), 365–385 (KPIS…TIAA), 396–418 (VFQL…WIVH), 428–448 (WEEI…WFNV), 457–477 (LFIY…LWYL), and 487–507 (FAIP…VFML).

Belongs to the XK family. In terms of assembly, homodimer; homodimerization takes place upon caspase cleavage. Interacts with the processed C-terminus of XRCC4 (protein XRCC4, C-terminus); interaction promotes the phospholipid scramblase activity. Undergoes proteolytic processing by caspase-3 (CASP3), caspase-6 (CASP6) and caspase-7 (CASP7) to generate the XK-related protein 4, processed form, leading to its activation.

The protein resides in the cell membrane. The enzyme catalyses a 1,2-diacyl-sn-glycero-3-phospho-L-serine(in) = a 1,2-diacyl-sn-glycero-3-phospho-L-serine(out). With respect to regulation, phospholipid scramblase activity is activated upon caspase cleavage to generate the XK-related protein 4, processed form. Does not act prior the onset of apoptosis. Its activity is regulated as follows. Homodimerizes upon caspase cleavage. Phospholipid scramblase activity is activated following interaction with the processed C-terminus of XRCC4 (protein XRCC4, C-terminus). Phospholipid scramblase that promotes phosphatidylserine exposure on apoptotic cell surface. Phosphatidylserine is a specific marker only present at the surface of apoptotic cells and acts as a specific signal for engulfment. The protein is XK-related protein 4 of Homo sapiens (Human).